A 907-amino-acid polypeptide reads, in one-letter code: Protein translocase subunit SecA (907 aa).

Residues Gln-87, 105–109, and Asp-513 each bind ATP; that span reads GEGKT. The span at 841 to 853 shows a compositional bias: basic and acidic residues; that stretch reads EAQRRAQAEEAAR. Positions 841–907 are disordered; the sequence is EAQRRAQAEE…KYKQCHGQIN (67 aa). Low complexity predominate over residues 854-865; the sequence is RAQAQHASAQSQ. Residues 872–887 show a composition bias toward basic and acidic residues; sequence EGHHQPVVRDERKVGR. Cys-891, Cys-893, Cys-902, and His-903 together coordinate Zn(2+).

It belongs to the SecA family. Monomer and homodimer. Part of the essential Sec protein translocation apparatus which comprises SecA, SecYEG and auxiliary proteins SecDF-YajC and YidC. Zn(2+) is required as a cofactor.

The protein resides in the cell inner membrane. It is found in the cytoplasm. It carries out the reaction ATP + H2O + cellular proteinSide 1 = ADP + phosphate + cellular proteinSide 2.. Its function is as follows. Part of the Sec protein translocase complex. Interacts with the SecYEG preprotein conducting channel. Has a central role in coupling the hydrolysis of ATP to the transfer of proteins into and across the cell membrane, serving both as a receptor for the preprotein-SecB complex and as an ATP-driven molecular motor driving the stepwise translocation of polypeptide chains across the membrane. In Vibrio vulnificus (strain CMCP6), this protein is Protein translocase subunit SecA.